A 2167-amino-acid polypeptide reads, in one-letter code: GTPase-activating protein BEM2/IPL2 (2167 aa).

Disordered stretches follow at residues 1–209 (MKGL…NDNE), 243–305 (TNYN…ASAR), and 353–372 (NSSI…NNQA). Residues 12–51 (SSTASASSSSTSTSHKTTTASTASSSSPSSSSQTIRNSTS) are compositionally biased toward low complexity. Lysine 27 participates in a covalent cross-link: Glycyl lysine isopeptide (Lys-Gly) (interchain with G-Cter in ubiquitin). Residues 58-70 (HSHHHHGQGHSHH) are compositionally biased toward basic residues. Positions 89–118 (KQYTSTSSSQVNLGMYHSDTNTRSSRSIAS) are enriched in polar residues. Residue serine 129 is modified to Phosphoserine. A compositionally biased stretch (polar residues) spans 134–145 (SNSSSQKSNAQD). Low complexity-rich tracts occupy residues 160–177 (SLLP…SRCS) and 187–207 (NTSG…NNND). Residues 243–252 (TNYNSSMTAP) are compositionally biased toward polar residues. Serine 283 is modified (phosphoserine). Positions 289 to 300 (SSSTTATNSGND) are enriched in low complexity. The Ras-GEF domain occupies 592 to 859 (DITTLADEVH…MKLSVQHEPP (268 aa)). Phosphoserine occurs at positions 1012 and 1016. A Phosphothreonine modification is found at threonine 1038. Serine 1046, serine 1054, and serine 1128 each carry phosphoserine. The span at 1771-1794 (ISGTHSDNDHSYNINKNTGQTPSL) shows a compositional bias: polar residues. The segment at 1771–1828 (ISGTHSDNDHSYNINKNTGQTPSLGSVMESNNSARNRRDSRASFSTNRSSVVSNSSHN) is disordered. Positions 1812–1828 (ASFSTNRSSVVSNSSHN) are enriched in low complexity. The PH domain maps to 1846–1948 (GFNTSSSNYS…WIKMIKASKR (103 aa)). The Rho-GAP domain maps to 1967–2165 (VPLEDVCERE…DFIKNPNDYF (199 aa)).

In terms of biological role, GTPase-activating protein (GAP) for RHO1 and RHO2. Involved in the control of cellular morphogenesis. Required for proper bud site selection and bud emergence. In Saccharomyces cerevisiae (strain ATCC 204508 / S288c) (Baker's yeast), this protein is GTPase-activating protein BEM2/IPL2 (BEM2).